A 116-amino-acid polypeptide reads, in one-letter code: Large ribosomal subunit protein bL17 (116 aa).

Belongs to the bacterial ribosomal protein bL17 family. As to quaternary structure, part of the 50S ribosomal subunit. Contacts protein L32.

In Thermosynechococcus vestitus (strain NIES-2133 / IAM M-273 / BP-1), this protein is Large ribosomal subunit protein bL17.